The chain runs to 396 residues: MSGPQHITILGATGSIGLSTLDVVARHPTLYQVFALTGFSRLDELLALCIKHTPQYAVVPEQVAARKLQDDLAAAGLDTRVLVGEGGLCEVAAHPMVDAVMAAIVGAAGLRPTLAAVEAGKKVLLANKEALVMSGALFMQAVRQSGAVLLPIDSEHNAIFQCLPGDFARGLGAVGVRRIMLTASGGPFRETPLEQLQDVTPEQACAHPVWSMGRKISVDSATMMNKGLELIEACWLFDARPDQVEVVIHPQSVIHSLVDYVDGSVLAQLGNPDMRTPIANALAWPARVDSGVAPLDLFRIGQLDFQEPDEERFPCLRLARQAAEAGGSAPAMLNAANEVAVAAFLDGRIRYLEIAGIIEEVLNREPVTAVVGLDAVFAADAKARLLAGQWLERNER.

NADPH is bound by residues Thr-13, Gly-14, Ser-15, Ile-16, and Asn-127. Residue Lys-128 participates in 1-deoxy-D-xylulose 5-phosphate binding. Residue Glu-129 coordinates NADPH. Position 153 (Asp-153) interacts with Mn(2+). 1-deoxy-D-xylulose 5-phosphate-binding residues include Ser-154, Glu-155, Ser-184, and His-207. Residue Glu-155 participates in Mn(2+) binding. Gly-213 contacts NADPH. 1-deoxy-D-xylulose 5-phosphate contacts are provided by Ser-220, Asn-225, Lys-226, and Glu-229. Glu-229 contacts Mn(2+).

The protein belongs to the DXR family. Mg(2+) serves as cofactor. Mn(2+) is required as a cofactor.

It catalyses the reaction 2-C-methyl-D-erythritol 4-phosphate + NADP(+) = 1-deoxy-D-xylulose 5-phosphate + NADPH + H(+). Its pathway is isoprenoid biosynthesis; isopentenyl diphosphate biosynthesis via DXP pathway; isopentenyl diphosphate from 1-deoxy-D-xylulose 5-phosphate: step 1/6. Its function is as follows. Catalyzes the NADPH-dependent rearrangement and reduction of 1-deoxy-D-xylulose-5-phosphate (DXP) to 2-C-methyl-D-erythritol 4-phosphate (MEP). The polypeptide is 1-deoxy-D-xylulose 5-phosphate reductoisomerase (Pseudomonas syringae pv. tomato (strain ATCC BAA-871 / DC3000)).